We begin with the raw amino-acid sequence, 189 residues long: Cell division protein SepF (189 aa).

Disordered regions lie at residues 1–75 and 155–174; these read MEGQ…GLPG and STPSSQGMPPLQRPLQSPTP.

This sequence belongs to the SepF family. Homodimer. Interacts with FtsZ.

Its subcellular location is the cytoplasm. Its function is as follows. Cell division protein that is part of the divisome complex and is recruited early to the Z-ring. Probably stimulates Z-ring formation, perhaps through the cross-linking of FtsZ protofilaments. Its function overlaps with FtsA. This Synechococcus sp. (strain JA-3-3Ab) (Cyanobacteria bacterium Yellowstone A-Prime) protein is Cell division protein SepF.